A 245-amino-acid polypeptide reads, in one-letter code: AP-1-like transcription factor YAP5 (245 aa).

Residues Leu34–Arg47 show a composition bias toward basic residues. The tract at residues Leu34–Glu77 is disordered. The region spanning Asp58–Leu121 is the bZIP domain. The segment at Lys63–Lys82 is basic motif. The span at Asn68–Glu77 shows a compositional bias: basic and acidic residues. The interval Leu86–Lys114 is leucine-zipper.

This sequence belongs to the bZIP family. YAP subfamily. In terms of assembly, homodimer.

The protein localises to the cytoplasm. The protein resides in the nucleus. Its function is as follows. Transcription activator involved in the regulation of genes expressed in response to environmental changes and metabolic requirements. According to genome-wide promoter binding and gene expression studies it is a coregulator for the expression of ribosomal genes, while its own expression is induced by the cell cycle specific activator SBF (SWI4-SWI6). In Saccharomyces cerevisiae (strain ATCC 204508 / S288c) (Baker's yeast), this protein is AP-1-like transcription factor YAP5 (YAP5).